A 328-amino-acid chain; its full sequence is Phosphate acyltransferase (328 aa).

This sequence belongs to the PlsX family. As to quaternary structure, homodimer. Probably interacts with PlsY.

Its subcellular location is the cytoplasm. The enzyme catalyses a fatty acyl-[ACP] + phosphate = an acyl phosphate + holo-[ACP]. It participates in lipid metabolism; phospholipid metabolism. Catalyzes the reversible formation of acyl-phosphate (acyl-PO(4)) from acyl-[acyl-carrier-protein] (acyl-ACP). This enzyme utilizes acyl-ACP as fatty acyl donor, but not acyl-CoA. The polypeptide is Phosphate acyltransferase (Staphylococcus aureus (strain MSSA476)).